Reading from the N-terminus, the 273-residue chain is Probable ribosomal RNA small subunit methyltransferase A (273 aa).

Positions 26, 28, 53, 74, 98, and 113 each coordinate S-adenosyl-L-methionine.

It belongs to the class I-like SAM-binding methyltransferase superfamily. rRNA adenine N(6)-methyltransferase family. RsmA subfamily.

It is found in the cytoplasm. Functionally, specifically dimethylates two adjacent adenosines in the loop of a conserved hairpin near the 3'-end of 16S rRNA in the 30S particle. May play a critical role in biogenesis of 30S subunits. This chain is Probable ribosomal RNA small subunit methyltransferase A, found in Methanothermobacter thermautotrophicus (strain ATCC 29096 / DSM 1053 / JCM 10044 / NBRC 100330 / Delta H) (Methanobacterium thermoautotrophicum).